Reading from the N-terminus, the 308-residue chain is Homoserine kinase (308 aa).

Pro-94–Thr-104 is an ATP binding site.

Belongs to the GHMP kinase family. Homoserine kinase subfamily.

Its subcellular location is the cytoplasm. The catalysed reaction is L-homoserine + ATP = O-phospho-L-homoserine + ADP + H(+). It functions in the pathway amino-acid biosynthesis; L-threonine biosynthesis; L-threonine from L-aspartate: step 4/5. In terms of biological role, catalyzes the ATP-dependent phosphorylation of L-homoserine to L-homoserine phosphate. The sequence is that of Homoserine kinase from Crocosphaera subtropica (strain ATCC 51142 / BH68) (Cyanothece sp. (strain ATCC 51142)).